The chain runs to 325 residues: L-lactate dehydrogenase 1 (325 aa).

NAD(+)-binding positions include Val-17, Asp-38, Lys-43, Tyr-68, and 82 to 83 (GA). Substrate contacts are provided by residues Gln-85, Arg-91, and 123–126 (NPVD). NAD(+) is bound by residues 121 to 123 (AAN) and Ser-146. 151-154 (DTAR) is a binding site for substrate. Residues Arg-156 and His-171 each coordinate beta-D-fructose 1,6-bisphosphate. Residue His-178 is the Proton acceptor of the active site. Tyr-223 is subject to Phosphotyrosine. Thr-232 provides a ligand contact to substrate.

The protein belongs to the LDH/MDH superfamily. LDH family. In terms of assembly, homotetramer.

Its subcellular location is the cytoplasm. It catalyses the reaction (S)-lactate + NAD(+) = pyruvate + NADH + H(+). It functions in the pathway fermentation; pyruvate fermentation to lactate; (S)-lactate from pyruvate: step 1/1. Its activity is regulated as follows. Allosterically activated by fructose 1,6-bisphosphate (FBP). Functionally, catalyzes the conversion of lactate to pyruvate. The chain is L-lactate dehydrogenase 1 from Lactococcus lactis subsp. cremoris (Streptococcus cremoris).